The sequence spans 536 residues: MKTKFIFVTGGVVSSIGKGLASASLGALLESRGLRVTMQKLDPYINVDPGTMSPFQHGEVFVTDDGAETDLDLGHYERYTSARLSKRSNFTTGQVYFSVIEKERRGDYLGGTVQVIPHITDEIKHKILENAKGADVAIVEVGGTVGDIESLPFLEAIRQFKADRGAGNVLYIHVTLVPHIKTAGELKTKPTQHSVKELREIGIQPDILICRCEMELPRDMKAKIALFCNVEEKAVITSTDAEHIYAVPLALHKEGLDEQVVEKLNIWTKAPDLSPWHSVVEKLRSPLRGEVRIAIVGKYVNLTESYKSLSEALTHGGIANDCRVVLTYLDSERIESEGIGSSFDDIDAILVPGGFGERGTEGKIKAIEYARTQKIPFFGICLGMQMAVVEYARNVCGLEDACSSEFRPDCANPVISLMEEQRDIDRLGGTMRLGAYPCSLTKGTFAQKAYGSLEISERHRHRYEYNNAFRETLVANGLVVSGLYKEGDLVEIVEVADHPWFLGCQFHPEFKSKPLNPHPLFRAFIAAALDRKDKRR.

The amidoligase domain stretch occupies residues 1-266; the sequence is MKTKFIFVTG…DEQVVEKLNI (266 aa). Residue serine 14 coordinates CTP. Serine 14 serves as a coordination point for UTP. ATP-binding positions include 15 to 20 and aspartate 72; that span reads SIGKGL. 2 residues coordinate Mg(2+): aspartate 72 and glutamate 140. CTP is bound by residues 147–149, 187–192, and lysine 223; these read DIE and KTKPTQ. Residues 187–192 and lysine 223 each bind UTP; that span reads KTKPTQ. The 243-residue stretch at 292–534 folds into the Glutamine amidotransferase type-1 domain; it reads RIAIVGKYVN…IAAALDRKDK (243 aa). Residue glycine 354 participates in L-glutamine binding. Cysteine 381 acts as the Nucleophile; for glutamine hydrolysis in catalysis. L-glutamine contacts are provided by residues 382–385, glutamate 405, and arginine 462; that span reads LGMQ. Catalysis depends on residues histidine 507 and glutamate 509.

The protein belongs to the CTP synthase family. Homotetramer.

It carries out the reaction UTP + L-glutamine + ATP + H2O = CTP + L-glutamate + ADP + phosphate + 2 H(+). The enzyme catalyses L-glutamine + H2O = L-glutamate + NH4(+). The catalysed reaction is UTP + NH4(+) + ATP = CTP + ADP + phosphate + 2 H(+). It participates in pyrimidine metabolism; CTP biosynthesis via de novo pathway; CTP from UDP: step 2/2. With respect to regulation, allosterically activated by GTP, when glutamine is the substrate; GTP has no effect on the reaction when ammonia is the substrate. The allosteric effector GTP functions by stabilizing the protein conformation that binds the tetrahedral intermediate(s) formed during glutamine hydrolysis. Inhibited by the product CTP, via allosteric rather than competitive inhibition. In terms of biological role, catalyzes the ATP-dependent amination of UTP to CTP with either L-glutamine or ammonia as the source of nitrogen. Regulates intracellular CTP levels through interactions with the four ribonucleotide triphosphates. The polypeptide is CTP synthase (Geobacter sulfurreducens (strain ATCC 51573 / DSM 12127 / PCA)).